The chain runs to 191 residues: Ribosome maturation factor RimP (191 aa).

This sequence belongs to the RimP family.

It is found in the cytoplasm. Functionally, required for maturation of 30S ribosomal subunits. This chain is Ribosome maturation factor RimP, found in Caulobacter vibrioides (strain NA1000 / CB15N) (Caulobacter crescentus).